A 157-amino-acid polypeptide reads, in one-letter code: MAEVANNEAQQNFQIQRVFLKDISFEAPNSPDMFQKEWNPDVKLDLDTQSRELGEGVYEVILRLTVTVKNAEETAFLCEVQQGGIFTVSGMEAPQLAHCLGAFSPNILFPYARETISSLVVKGTFPQLNLAPVNFDALFMNYLQNQAEANTESTEKA.

This sequence belongs to the SecB family. Homotetramer, a dimer of dimers. One homotetramer interacts with 1 SecA dimer.

The protein localises to the cytoplasm. One of the proteins required for the normal export of preproteins out of the cell cytoplasm. It is a molecular chaperone that binds to a subset of precursor proteins, maintaining them in a translocation-competent state. It also specifically binds to its receptor SecA. The protein is Protein-export protein SecB of Photobacterium profundum (strain SS9).